A 332-amino-acid polypeptide reads, in one-letter code: Putative pumilio homolog 17 (332 aa).

One can recognise a PUM-HD domain in the interval 1–302 (MTNINRLSMS…ILTADLFYSL (302 aa)). One copy of the Pumilio 1 repeat lies at 82–117 (SDSDYFMVITRNKNGSKSLQKLMRMSDDMDVFFFVA). A Pumilio 2; degenerate repeat occupies 118 to 152 (IMRLFIHVMIDKYASYVAIQGMRIFKQDKRELMYD). 4 Pumilio repeats span residues 153–188 (HILRYALFLARDQYGCIALNEIIKELDDPYYRDELM), 189–225 (DIVSNNALLLSNDAYGNFVVQHVLKLHDSRCTGNIAD), 226–264 (KLCGYCVELSFKKYGSYIVERLLEVRDIPMATIVLDLLA), and 265–300 (CKTEMLIRLARSENGNFVVCKLLELTNDILTADLFY).

The protein resides in the cytoplasm. In terms of biological role, sequence-specific RNA-binding protein that regulates translation and mRNA stability by binding the 3'-UTR of target mRNAs. This Arabidopsis thaliana (Mouse-ear cress) protein is Putative pumilio homolog 17 (APUM17).